The primary structure comprises 253 residues: Probable transcriptional regulatory protein A1G_04400 (253 aa).

The disordered stretch occupies residues methionine 1–arginine 21.

This sequence belongs to the TACO1 family.

Its subcellular location is the cytoplasm. In Rickettsia rickettsii (strain Sheila Smith), this protein is Probable transcriptional regulatory protein A1G_04400.